The sequence spans 428 residues: Enolase (428 aa).

Position 163 (Gln-163) interacts with (2R)-2-phosphoglycerate. The active-site Proton donor is the Glu-205. Mg(2+)-binding residues include Asp-242, Glu-286, and Asp-313. 4 residues coordinate (2R)-2-phosphoglycerate: Lys-338, Arg-367, Ser-368, and Lys-389. The Proton acceptor role is filled by Lys-338.

The protein belongs to the enolase family. The cofactor is Mg(2+).

It is found in the cytoplasm. It localises to the secreted. Its subcellular location is the cell surface. The catalysed reaction is (2R)-2-phosphoglycerate = phosphoenolpyruvate + H2O. It participates in carbohydrate degradation; glycolysis; pyruvate from D-glyceraldehyde 3-phosphate: step 4/5. Functionally, catalyzes the reversible conversion of 2-phosphoglycerate (2-PG) into phosphoenolpyruvate (PEP). It is essential for the degradation of carbohydrates via glycolysis. This Bordetella petrii (strain ATCC BAA-461 / DSM 12804 / CCUG 43448) protein is Enolase.